We begin with the raw amino-acid sequence, 602 residues long: ATP-dependent DNA helicase XPD (602 aa).

The Helicase ATP-binding domain maps to 1–247 (MQKSYGVALE…DLIEMIRSAL (247 aa)). 11-18 (SPTGSGKT) lines the ATP pocket. [4Fe-4S] cluster is bound by residues C74, C95, C110, and C146. The DEAH box motif lies at 193–196 (DEAH). In terms of domain architecture, Helicase C-terminal spans 421 to 602 (VIEDIILKVK…SAQAREKYGA (182 aa)). 2 residues coordinate ssDNA: W531 and R566.

It belongs to the helicase family. RAD3/XPD subfamily. In terms of assembly, monomer. It depends on [4Fe-4S] cluster as a cofactor.

The catalysed reaction is Couples ATP hydrolysis with the unwinding of duplex DNA at the replication fork by translocating in the 5'-3' direction. This creates two antiparallel DNA single strands (ssDNA). The leading ssDNA polymer is the template for DNA polymerase III holoenzyme which synthesizes a continuous strand.. It carries out the reaction ATP + H2O = ADP + phosphate + H(+). In terms of biological role, ATP-dependent 5'-3' DNA helicase. Thought to be involved in nucleotide excision repair (NER) of DNA. The polypeptide is ATP-dependent DNA helicase XPD (Thermoplasma acidophilum (strain ATCC 25905 / DSM 1728 / JCM 9062 / NBRC 15155 / AMRC-C165)).